Reading from the N-terminus, the 261-residue chain is Hemin import ATP-binding protein HmuV (261 aa).

Residues 5–241 (LTANAASFAI…DLLARVFDVD (237 aa)) form the ABC transporter domain. ATP is bound at residue 37–44 (GPNGAGKS).

It belongs to the ABC transporter superfamily. Heme (hemin) importer (TC 3.A.1.14.5) family. The complex is composed of two ATP-binding proteins (HmuV), two transmembrane proteins (HmuU) and a solute-binding protein (HmuT).

The protein resides in the cell inner membrane. Its function is as follows. Part of the ABC transporter complex HmuTUV involved in hemin import. Responsible for energy coupling to the transport system. The protein is Hemin import ATP-binding protein HmuV of Rhodopseudomonas palustris (strain BisB5).